We begin with the raw amino-acid sequence, 507 residues long: FAD-linked oxidoreductase OXR1 (507 aa).

An N-terminal signal peptide occupies residues 1–21 (MTIKFASLILAGLGLGSGALG). N-linked (GlcNAc...) asparagine glycosylation is found at asparagine 34 and asparagine 65. An FAD-binding PCMH-type domain is found at 73-245 (YAPPTFKVSV…VSATYKLKPL (173 aa)). 2 N-linked (GlcNAc...) asparagine glycosylation sites follow: asparagine 263 and asparagine 288.

It belongs to the oxygen-dependent FAD-linked oxidoreductase family. The cofactor is FAD.

It carries out the reaction dihydropyriculol + A = pyriculol + AH2. The catalysed reaction is dihydropyriculariol + A = pyriculariol + AH2. The protein operates within polyketide biosynthesis. In terms of biological role, FAD-linked oxidoreductase; part of the gene cluster that mediates the biosynthesis of pyriculol and pyriculariol, two heptaketides that induce lesion formation upon application on rice leaves but are dispensable for pathogenicity. The highly reducing polyketide synthase synthesizes the heptaketide backbone of pyriculol and pyriculariol. Pyriculol and pyriculariol contain several hydroxyl moieties and double bonds, so it can be assumed that several reduction steps occur during biosynthesis. These reactions could be executed by PKS19 itself or partly by the tailoring enzymes OXR1, OXR2, RED1, RED2 or RED3, identified within the cluster. The FAD-linked oxidoreductase OXR1 is the only tailoring enzyme for which the function has been determined yet, and is involved in the oxidation of dihydropyriculol and dihydropyriculariol into pyriculol and pyriculariol, respectively. The sequence is that of FAD-linked oxidoreductase OXR1 from Pyricularia oryzae (strain 70-15 / ATCC MYA-4617 / FGSC 8958) (Rice blast fungus).